A 312-amino-acid chain; its full sequence is Bifunctional pinoresinol-lariciresinol reductase 2 (312 aa).

NADP(+)-binding positions include 11–17 (GGTGYIG), Arg-36, and Lys-45. The active-site Proton acceptor is Lys-138. Residue Arg-142 coordinates NADP(+). His-270 serves as a coordination point for substrate.

It belongs to the NmrA-type oxidoreductase family. Isoflavone reductase subfamily. As to quaternary structure, dimer.

It catalyses the reaction (+)-lariciresinol + NADP(+) = (+)-pinoresinol + NADPH + H(+). It carries out the reaction (-)-secoisolariciresinol + NADP(+) = (+)-lariciresinol + NADPH + H(+). The catalysed reaction is (-)-lariciresinol + NADP(+) = (-)-pinoresinol + NADPH + H(+). In terms of biological role, reductase involved in lignan biosynthesis. Catalyzes the enantioselective sequential conversion of (+)-pinoresinol into (+)-lariciresinol and of (+)-lariciresinol into (-)-secoisolariciresinol. Can also convert with a lower efficiency (-)-pinoresinol into (-)-lariciresinol, but not (-)-lariciresinol into (+)-secoisolariciresinol. Abstracts the 4R-hydride from the NADPH cofactor during catalysis. This chain is Bifunctional pinoresinol-lariciresinol reductase 2 (PLR_Tp2), found in Thuja plicata (Western red-cedar).